The chain runs to 201 residues: IMP cyclohydrolase (201 aa).

Belongs to the archaeal IMP cyclohydrolase family.

It carries out the reaction IMP + H2O = 5-formamido-1-(5-phospho-D-ribosyl)imidazole-4-carboxamide. The protein operates within purine metabolism; IMP biosynthesis via de novo pathway; IMP from 5-formamido-1-(5-phospho-D-ribosyl)imidazole-4-carboxamide: step 1/1. In terms of biological role, catalyzes the cyclization of 5-formylamidoimidazole-4-carboxamide ribonucleotide to IMP. This chain is IMP cyclohydrolase, found in Methanocella arvoryzae (strain DSM 22066 / NBRC 105507 / MRE50).